Here is a 161-residue protein sequence, read N- to C-terminus: uncharacterized protein (161 aa).

Residues 5–25 (GPTLLSLLAALLVSLGLLLWY) traverse the membrane as a helical segment.

It belongs to the IIV-6 203L/325L family.

Its subcellular location is the membrane. This is an uncharacterized protein from Invertebrate iridescent virus 3 (IIV-3).